The following is a 423-amino-acid chain: Putative competence-damage inducible protein (423 aa).

It belongs to the CinA family.

The polypeptide is Putative competence-damage inducible protein (Streptococcus pyogenes serotype M2 (strain MGAS10270)).